The sequence spans 433 residues: Enolase (433 aa).

Q167 contacts (2R)-2-phosphoglycerate. E209 (proton donor) is an active-site residue. Mg(2+) contacts are provided by D246, E291, and D318. K326 is modified (N6-acetyllysine). Residues K343, R372, S373, and K394 each coordinate (2R)-2-phosphoglycerate. K343 (proton acceptor) is an active-site residue. K343 carries the post-translational modification N6-(2-hydroxyisobutyryl)lysine.

The protein belongs to the enolase family. As to quaternary structure, component of the RNA degradosome, a multiprotein complex involved in RNA processing and mRNA degradation. Mg(2+) serves as cofactor. Acetylated and 2-hydroxyisobutyrylated at Lys-326 and Lys-343, respectively, reducing the enolase activity. Deacetylated and de-2-hydroxyisobutyrylated by NpdA/CobB, increasing the enolase activity.

It localises to the cytoplasm. The protein resides in the secreted. The protein localises to the cell surface. It catalyses the reaction (2R)-2-phosphoglycerate = phosphoenolpyruvate + H2O. Its pathway is carbohydrate degradation; glycolysis; pyruvate from D-glyceraldehyde 3-phosphate: step 4/5. Its function is as follows. Catalyzes the reversible conversion of 2-phosphoglycerate (2-PG) into phosphoenolpyruvate (PEP). It is essential for the degradation of carbohydrates via glycolysis. This is Enolase from Proteus mirabilis (strain HI4320).